The sequence spans 366 residues: Sodium-potassium/proton antiporter ChaA (366 aa).

Topologically, residues 1 to 16 are cytoplasmic; it reads MSNAQEAVKTRHKETS. Transmembrane regions (helical) follow at residues 17-37 and 38-58; these read LIFPVLALVVLFLWGSSQTLP and VVIAINLLALIGILSSAFSVV. Topologically, residues 59-74 are cytoplasmic; sequence RHADVLAHRLGEPYGS. Residues 75–95 traverse the membrane as a helical segment; the sequence is LILSLSVVILEVSLISALMAT. The Periplasmic portion of the chain corresponds to 96 to 106; sequence GDAAPTLMRDT. Residues 107-127 traverse the membrane as a helical segment; that stretch reads LYSIIMIVTGGLVGFSLLLGG. Topologically, residues 128 to 143 are cytoplasmic; it reads RKFATQYMNLFGIKQY. A helical transmembrane segment spans residues 144-164; it reads LIALFPLAIIVLVFPMALPAA. The Periplasmic portion of the chain corresponds to 165 to 167; that stretch reads NFS. Residues 168-188 form a helical membrane-spanning segment; it reads TGQALLVALISAAMYGVFLLI. Residues 189-216 lie on the Cytoplasmic side of the membrane; that stretch reads QTKTHQSLFVYEHEDDSDDDDPHHGKPS. Residues 217–237 form a helical membrane-spanning segment; the sequence is AHSSLWHAIWLIIHLIAVIAV. Residues 238-255 lie on the Periplasmic side of the membrane; sequence TKMNASSLETLLDSMNAP. The helical transmembrane segment at 256 to 276 threads the bilayer; it reads VAFTGFLVALLILSPEGLGAL. Over 277 to 290 the chain is Cytoplasmic; it reads KAVLNNQVQRAMNL. Residues 291–311 form a helical membrane-spanning segment; it reads FFGSVLATISLTVPVVTLIAF. At 312–318 the chain is on the periplasmic side; that stretch reads MTGNELQ. Residues 319 to 339 form a helical membrane-spanning segment; sequence FALGAPEMVVMVASLVLCHIS. The Cytoplasmic portion of the chain corresponds to 340–345; sequence FSTGRT. A helical transmembrane segment spans residues 346–366; it reads NVLNGAAHLALFAAYLMTIFA.

Belongs to the Ca(2+):cation antiporter (CaCA) (TC 2.A.19) family.

It localises to the cell inner membrane. The catalysed reaction is Na(+)(in) + H(+)(out) = Na(+)(out) + H(+)(in). It carries out the reaction K(+)(in) + H(+)(out) = K(+)(out) + H(+)(in). The enzyme catalyses Ca(2+)(in) + H(+)(out) = Ca(2+)(out) + H(+)(in). Its activity is regulated as follows. Pronounced pH dependence with sodium as substrate. Ca(2+)/H(+) and Na(+)/H(+) antiporter activities are both inhibited by magnesium. Ca(2+)/H(+) activity is inhibited by the proton ionophore carbonyl cyanide m-chlorophenylhydrazone (CCCP). Sodium exporter that functions mainly at alkaline pH. Can also function as a potassium/proton and calcium/proton antiporter at alkaline pH. Does not play a major role in calcium export. The K(+)/H(+) antiporter activity may enable E.coli to adapt to K(+) salinity stress and to maintain K(+) homeostasis. This Escherichia coli (strain K12) protein is Sodium-potassium/proton antiporter ChaA.